We begin with the raw amino-acid sequence, 396 residues long: Enoyl-[acyl-carrier-protein] reductase [NADH] (396 aa).

Residues G48–Y53, F74–E75, D111–A112, and L139–A140 each bind NAD(+). A substrate-binding site is contributed by Y225. Residue Y235 is the Proton donor of the active site. Residues K244 and V273 to T275 each bind NAD(+).

The protein belongs to the TER reductase family. In terms of assembly, monomer.

The enzyme catalyses a 2,3-saturated acyl-[ACP] + NAD(+) = a (2E)-enoyl-[ACP] + NADH + H(+). It functions in the pathway lipid metabolism; fatty acid biosynthesis. Its function is as follows. Involved in the final reduction of the elongation cycle of fatty acid synthesis (FAS II). Catalyzes the reduction of a carbon-carbon double bond in an enoyl moiety that is covalently linked to an acyl carrier protein (ACP). In Teredinibacter turnerae (strain ATCC 39867 / T7901), this protein is Enoyl-[acyl-carrier-protein] reductase [NADH].